The chain runs to 400 residues: Haptoglobin (400 aa).

An N-terminal signal peptide occupies residues 1-18 (MSALPVVVTLLLCGQLLA). 2 Sushi domains span residues 28–83 (DSCP…ECED) and 84–141 (ASCP…ECEA). Intrachain disulfides connect C49/C81, C105/C139, and C143/C260. The Peptidase S1 domain maps to 156-398 (IIGGSLDAKG…ILDWVRKTIA (243 aa)). N-linked (GlcNAc...) asparagine glycosylation is found at N285, N309, and N315. Disulfide bonds link C303–C334 and C345–C375. The segment at 312 to 317 (VPENKT) is interaction with CD163.

It belongs to the peptidase S1 family. As to quaternary structure, tetramer of two alpha and two beta chains; disulfide-linked. The hemoglobin/haptoglobin complex is composed of a haptoglobin dimer bound to two hemoglobin alpha-beta dimers. Interacts with CD163. Interacts with ERGIC3. As to expression, expressed by the liver and secreted in plasma.

Its subcellular location is the secreted. The protein resides in the extracellular space. Functionally, as a result of hemolysis, hemoglobin is found to accumulate in the kidney and is secreted in the urine. Haptoglobin captures, and combines with free plasma hemoglobin to allow hepatic recycling of heme iron and to prevent kidney damage. Haptoglobin also acts as an antioxidant, has antibacterial activity and plays a role in modulating many aspects of the acute phase response. Hemoglobin/haptoglobin complexes are rapidly cleared by the macrophage CD163 scavenger receptor expressed on the surface of liver Kupfer cells through an endocytic lysosomal degradation pathway. This is Haptoglobin (HP) from Cervus elaphus (Red deer).